A 419-amino-acid chain; its full sequence is Arginine biosynthesis bifunctional protein ArgJ (419 aa).

The substrate site is built by Thr154, Lys180, Thr191, Glu277, Asn414, and Thr419. Residue Thr191 is the Nucleophile of the active site.

This sequence belongs to the ArgJ family. Heterotetramer of two alpha and two beta chains.

Its subcellular location is the cytoplasm. The catalysed reaction is N(2)-acetyl-L-ornithine + L-glutamate = N-acetyl-L-glutamate + L-ornithine. It catalyses the reaction L-glutamate + acetyl-CoA = N-acetyl-L-glutamate + CoA + H(+). It functions in the pathway amino-acid biosynthesis; L-arginine biosynthesis; L-ornithine and N-acetyl-L-glutamate from L-glutamate and N(2)-acetyl-L-ornithine (cyclic): step 1/1. Its pathway is amino-acid biosynthesis; L-arginine biosynthesis; N(2)-acetyl-L-ornithine from L-glutamate: step 1/4. In terms of biological role, catalyzes two activities which are involved in the cyclic version of arginine biosynthesis: the synthesis of N-acetylglutamate from glutamate and acetyl-CoA as the acetyl donor, and of ornithine by transacetylation between N(2)-acetylornithine and glutamate. The sequence is that of Arginine biosynthesis bifunctional protein ArgJ from Thermosynechococcus vestitus (strain NIES-2133 / IAM M-273 / BP-1).